Reading from the N-terminus, the 372-residue chain is Neutral protease 2 homolog MGYG_06241 (372 aa).

Positions 1 to 19 (MQFFTAIAAISALVAPALA) are cleaved as a signal peptide. The propeptide occupies 20–188 (LPTQELPQAP…THFAGTLNRR (169 aa)). Intrachain disulfides connect Cys-195-Cys-264 and Cys-271-Cys-289. His-313 lines the Zn(2+) pocket. The active site involves Glu-314. 2 residues coordinate Zn(2+): His-317 and Asp-328.

This sequence belongs to the peptidase M35 family. Requires Zn(2+) as cofactor.

The protein resides in the secreted. The catalysed reaction is Preferential cleavage of bonds with hydrophobic residues in P1'. Also 3-Asn-|-Gln-4 and 8-Gly-|-Ser-9 bonds in insulin B chain.. Its function is as follows. Secreted metalloproteinase that allows assimilation of proteinaceous substrates. Shows high activities on basic nuclear substrates such as histone and protamine. May be involved in virulence. This chain is Neutral protease 2 homolog MGYG_06241, found in Arthroderma gypseum (strain ATCC MYA-4604 / CBS 118893) (Microsporum gypseum).